The primary structure comprises 390 residues: Transposase for insertion sequence element IS21 (390 aa).

The HTH IS21-type domain maps to 5-66 (EDFYMIKQMR…PFMDYIDMRL (62 aa)). Residues 20–39 (IVDIATQIGCSERTVRRYLK) constitute a DNA-binding region (H-T-H motif). Residues 111–285 (FETQPRYQLQ…TPEQRFALEQ (175 aa)) form the Integrase catalytic domain.

The protein belongs to the transposase IS21/IS408/IS1162 family.

Involved in the transposition of the insertion sequence. The sequence is that of Transposase for insertion sequence element IS21 (istA) from Pseudomonas aeruginosa.